Here is a 262-residue protein sequence, read N- to C-terminus: MIDATAQIHPTAVVEEGAVIGANVKIGPFCYVDSKVEIGEGTELLSHVVVKGPTKIGKENRIFQFASIGEQCQDLKYAGEDTQLVIGDRNTIRESVTMHRGTVQDKGITIVGSDNLFMINAHVAHDCVIGDRCIFANNATLAGHVKVGNQAIVGGMSAIHQFCHIGDHCMLGGGSIVVQDVPPYVMAQGNHCAPFGINVEGLKRRGFEKKEILAIRRAYKTLYRSGLTLEAAKEEIAKETEAFPAVKLFLEFLEKSQRGIIR.

Belongs to the transferase hexapeptide repeat family. LpxA subfamily. Homotrimer.

It is found in the cytoplasm. It catalyses the reaction a (3R)-hydroxyacyl-[ACP] + UDP-N-acetyl-alpha-D-glucosamine = a UDP-3-O-[(3R)-3-hydroxyacyl]-N-acetyl-alpha-D-glucosamine + holo-[ACP]. It functions in the pathway glycolipid biosynthesis; lipid IV(A) biosynthesis; lipid IV(A) from (3R)-3-hydroxytetradecanoyl-[acyl-carrier-protein] and UDP-N-acetyl-alpha-D-glucosamine: step 1/6. Functionally, involved in the biosynthesis of lipid A, a phosphorylated glycolipid that anchors the lipopolysaccharide to the outer membrane of the cell. This is Acyl-[acyl-carrier-protein]--UDP-N-acetylglucosamine O-acyltransferase from Vibrio vulnificus (strain CMCP6).